Here is a 237-residue protein sequence, read N- to C-terminus: 2,3-bisphosphoglycerate-dependent phosphoglycerate mutase (237 aa).

Residues 8 to 15 (RHGQSQWN), 21 to 22 (TG), Arg60, 87 to 90 (ERHY), Lys98, 114 to 115 (RR), and 180 to 181 (GN) each bind substrate. His9 acts as the Tele-phosphohistidine intermediate in catalysis. Residue Glu87 is the Proton donor/acceptor of the active site.

Belongs to the phosphoglycerate mutase family. BPG-dependent PGAM subfamily. In terms of assembly, homodimer.

It catalyses the reaction (2R)-2-phosphoglycerate = (2R)-3-phosphoglycerate. It participates in carbohydrate degradation; glycolysis; pyruvate from D-glyceraldehyde 3-phosphate: step 3/5. Catalyzes the interconversion of 2-phosphoglycerate and 3-phosphoglycerate. This chain is 2,3-bisphosphoglycerate-dependent phosphoglycerate mutase, found in Caulobacter sp. (strain K31).